Consider the following 179-residue polypeptide: MSRIGKQPIPVPSGVEVKLGADVVEVKGPKGSLTTPVSPLLKYEIQDGSVVITRVEETKKASAQHGLRRTLLANCIEGVSKGFSKVLEVNGVGYKVAVKGNNIELALGFSHPVVIELPKGIEAAAAGNKLTISGFDKQLVGEVAANIRRVRPPEPYKGKGVKYEHEQIRRKAGKSGGKK.

A compositionally biased stretch (basic and acidic residues) spans 154 to 169 (EPYKGKGVKYEHEQIR). A disordered region spans residues 154 to 179 (EPYKGKGVKYEHEQIRRKAGKSGGKK). Over residues 170-179 (RKAGKSGGKK) the composition is skewed to basic residues.

It belongs to the universal ribosomal protein uL6 family. Part of the 50S ribosomal subunit.

Its function is as follows. This protein binds to the 23S rRNA, and is important in its secondary structure. It is located near the subunit interface in the base of the L7/L12 stalk, and near the tRNA binding site of the peptidyltransferase center. The sequence is that of Large ribosomal subunit protein uL6 from Oleidesulfovibrio alaskensis (strain ATCC BAA-1058 / DSM 17464 / G20) (Desulfovibrio alaskensis).